Consider the following 457-residue polypeptide: MDHLPIFCQLRDRDCLLVGGGDVAERKARLLLEAGARLTVNALAFIPQFTVWANEGMLTLVEGAFEESLLDGCWLAIAATDDDAVNQQVSEAAESRRIFCNVVDAPKAASFIMPSIIDRSPLMVAVSSGGTSPVLARLLREKLESLLPQHLGQVAHYAGQLRARVKKQFATMGERRRFWEKLFINDRLAQSLANADAKAVSEITEQMLSEPLDHRGEVVLVGAGPGDAGLLTLKGLQQIQQADVVVYDRLVSDDIMNLVRRDADRVFVGKRAGYHCVPQEEINQILLREAQKGRRVVRLKGGDPFIFGRGGEELETLCHAGIPFSVVPGITAASGCSAYSGVPLTHRDYAQSVRLVTGHLKTGGELDWENLAAEKQTLVFYMGLNQAATIQEKLIAFGMQADMPVALVENGTAVKQRVVSGVLAQLGELAKQVESPALIIVGRVVALRDKLNWFSNH.

The interval 1-204 (MDHLPIFCQL…ADAKAVSEIT (204 aa)) is precorrin-2 dehydrogenase /sirohydrochlorin ferrochelatase. Residues 22–23 (DV) and 43–44 (LA) contribute to the NAD(+) site. Serine 128 carries the phosphoserine modification. Residues 216-457 (GEVVLVGAGP…RDKLNWFSNH (242 aa)) form a uroporphyrinogen-III C-methyltransferase region. Proline 225 is a binding site for S-adenosyl-L-methionine. The Proton acceptor role is filled by aspartate 248. The Proton donor role is filled by lysine 270. S-adenosyl-L-methionine-binding positions include 301–303 (GGD), isoleucine 306, 331–332 (TA), methionine 382, and glycine 411.

In the N-terminal section; belongs to the precorrin-2 dehydrogenase / sirohydrochlorin ferrochelatase family. It in the C-terminal section; belongs to the precorrin methyltransferase family.

It carries out the reaction uroporphyrinogen III + 2 S-adenosyl-L-methionine = precorrin-2 + 2 S-adenosyl-L-homocysteine + H(+). The catalysed reaction is precorrin-2 + NAD(+) = sirohydrochlorin + NADH + 2 H(+). It catalyses the reaction siroheme + 2 H(+) = sirohydrochlorin + Fe(2+). It functions in the pathway cofactor biosynthesis; adenosylcobalamin biosynthesis; precorrin-2 from uroporphyrinogen III: step 1/1. It participates in cofactor biosynthesis; adenosylcobalamin biosynthesis; sirohydrochlorin from precorrin-2: step 1/1. The protein operates within porphyrin-containing compound metabolism; siroheme biosynthesis; precorrin-2 from uroporphyrinogen III: step 1/1. Its pathway is porphyrin-containing compound metabolism; siroheme biosynthesis; siroheme from sirohydrochlorin: step 1/1. It functions in the pathway porphyrin-containing compound metabolism; siroheme biosynthesis; sirohydrochlorin from precorrin-2: step 1/1. Its function is as follows. Multifunctional enzyme that catalyzes the SAM-dependent methylations of uroporphyrinogen III at position C-2 and C-7 to form precorrin-2 via precorrin-1. Then it catalyzes the NAD-dependent ring dehydrogenation of precorrin-2 to yield sirohydrochlorin. Finally, it catalyzes the ferrochelation of sirohydrochlorin to yield siroheme. This is Siroheme synthase from Citrobacter koseri (strain ATCC BAA-895 / CDC 4225-83 / SGSC4696).